We begin with the raw amino-acid sequence, 432 residues long: Keratin, type I cytoskeletal 17 (432 aa).

Residues 1-24 (MTTTIRQFTSSSSIKGSSGLGGGS) form a disordered region. Residues 1–83 (MTTTIRQFTS…GGVDGLLAGG (83 aa)) are head. Residues Ser-12 and Ser-13 each carry the phosphoserine modification. Lys-15 is covalently cross-linked (Glycyl lysine isopeptide (Lys-Gly) (interchain with G-Cter in SUMO1); alternate). Lys-15 participates in a covalent cross-link: Glycyl lysine isopeptide (Lys-Gly) (interchain with G-Cter in SUMO2); alternate. Ser-25, Ser-32, and Ser-39 each carry phosphoserine. Ser-44 carries the phosphoserine; by RPS6KA1 modification. A coil 1A region spans residues 84–120 (EKATMQNLNDRLASYLDKVRALEEANTELEVKIRDWY). The region spanning 84–395 (EKATMQNLND…RLLEGEDAHL (312 aa)) is the IF rod domain. Thr-110 is subject to Phosphothreonine. The tract at residues 121–138 (QRQAPGPARDYSQYYRTI) is linker 1. A coil 1B region spans residues 139–230 (EELQNKILTA…NHEEEMNALR (92 aa)). The segment at 231–250 (GQVGGEINVEMDAAPGVDLS) is linker 12. The tract at residues 251–392 (RILNEMRDQY…TYRRLLEGED (142 aa)) is coil 2. A Glycyl lysine isopeptide (Lys-Gly) (interchain with G-Cter in SUMO2) cross-link involves residue Lys-278. Thr-279 is subject to Phosphothreonine. Ser-323 carries the phosphoserine modification. Residues 393–432 (AHLTQYKKEPVTTRQVRTIVEEVQDGKVISSREQVHQTTR) form a tail region. Residues Lys-399, Lys-400, and Lys-419 each participate in a glycyl lysine isopeptide (Lys-Gly) (interchain with G-Cter in SUMO1); alternate cross-link. Residues Lys-399, Lys-400, and Lys-419 each participate in a glycyl lysine isopeptide (Lys-Gly) (interchain with G-Cter in SUMO2); alternate cross-link.

This sequence belongs to the intermediate filament family. In terms of assembly, heterodimer of a type I and a type II keratin. KRT17 associates with KRT6 isomers (KRT6A or KRT6B). Interacts with TRADD and SFN. In terms of processing, phosphorylation at Ser-44 occurs in a growth- and stress-dependent fashion in skin keratinocytes, it has no effect on filament organization.

Its subcellular location is the cytoplasm. In terms of biological role, type I keratin involved in the formation and maintenance of various skin appendages, specifically in determining shape and orientation of hair. Required for the correct growth of hair follicles, in particular for the persistence of the anagen (growth) state. Modulates the function of TNF-alpha in the specific context of hair cycling. Regulates protein synthesis and epithelial cell growth through binding to the adapter protein SFN and by stimulating Akt/mTOR pathway. Involved in tissue repair. May be a marker of basal cell differentiation in complex epithelia and therefore indicative of a certain type of epithelial 'stem cells'. Acts as a promoter of epithelial proliferation by acting a regulator of immune response in skin: promotes Th1/Th17-dominated immune environment contributing to the development of basaloid skin tumors. May act as an autoantigen in the immunopathogenesis of psoriasis, with certain peptide regions being a major target for autoreactive T-cells and hence causing their proliferation. In Pan troglodytes (Chimpanzee), this protein is Keratin, type I cytoskeletal 17.